Reading from the N-terminus, the 656-residue chain is Chaperone protein DnaK (656 aa).

Thr204 carries the post-translational modification Phosphothreonine; by autocatalysis. Residues 602 to 656 (KLAERVYAKKGGAAGAPPGGEAEGEPQAQAGGKKEDVVDAEFEEVKDEKKKDEDK) are disordered. The span at 620-632 (GGEAEGEPQAQAG) shows a compositional bias: low complexity. Positions 647-656 (KDEKKKDEDK) are enriched in basic and acidic residues.

It belongs to the heat shock protein 70 family.

In terms of biological role, acts as a chaperone. This is Chaperone protein DnaK from Coxiella burnetii (strain CbuG_Q212) (Coxiella burnetii (strain Q212)).